Here is a 127-residue protein sequence, read N- to C-terminus: V-type proton ATPase subunit F (127 aa).

Belongs to the V-ATPase F subunit family. As to quaternary structure, V-ATPase is a heteromultimeric enzyme made up of two complexes: the ATP-hydrolytic V1 complex and the proton translocation V0 complex. The V1 complex consists of three catalytic AB heterodimers that form a heterohexamer, three peripheral stalks each consisting of EG heterodimers, one central rotor including subunits D and F, and the regulatory subunits C and H. The proton translocation complex V0 consists of the proton transport subunit a, a ring of proteolipid subunits c9c'', rotary subunit d, subunits e and f, and the accessory subunits VhaAC45 and ATP6AP2.

Functionally, subunit of the V1 complex of vacuolar(H+)-ATPase (V-ATPase), a multisubunit enzyme composed of a peripheral complex (V1) that hydrolyzes ATP and a membrane integral complex (V0) that translocates protons. V-ATPase is responsible for acidifying and maintaining the pH of intracellular compartments and in some cell types, is targeted to the plasma membrane, where it is responsible for acidifying the extracellular environment. The chain is V-type proton ATPase subunit F (Vha14) from Anopheles gambiae (African malaria mosquito).